The following is a 243-amino-acid chain: PF03932 family protein CutC (243 aa).

The protein belongs to the CutC family.

It localises to the cytoplasm. This chain is PF03932 family protein CutC, found in Parabacteroides distasonis (strain ATCC 8503 / DSM 20701 / CIP 104284 / JCM 5825 / NCTC 11152).